A 717-amino-acid polypeptide reads, in one-letter code: Putative amino acid transporter AAT1 (717 aa).

Basic and acidic residues predominate over residues 1 to 10 (MREGAFDASR). The tract at residues 1–88 (MREGAFDASR…DRAQTDSRQE (88 aa)) is disordered. Residues 16–25 (QRPSSLSTAQ) are compositionally biased toward polar residues. The span at 26–53 (PPSDSRPPSSSSPPSSSSSSSSASSSSP) shows a compositional bias: low complexity. Residues 74-88 (SAEKMDRAQTDSRQE) are compositionally biased toward basic and acidic residues. 8 consecutive transmembrane segments (helical) span residues 124–143 (VLTL…PYAM), 149–170 (LIGL…YILM), 196–216 (AVDA…LVFL), 236–253 (HRAA…PLSV), 265–283 (FFPV…YRSL), 303–320 (FKSF…INVC), 341–358 (AALL…LGYL), and 378–402 (LMHV…IPTV). The disordered stretch occupies residues 462-602 (GDAEYGGAEA…REEREEREGQ (141 aa)). Residues 463–477 (DAEYGGAEAGEATRG) show a composition bias toward low complexity. Residues 497–519 (ARNRDRSRLHADSERSAGDREGS) show a composition bias toward basic and acidic residues. Positions 547–558 (GSSSASSRSVDS) are enriched in low complexity. The segment covering 584-602 (SGDREAREEREEREEREGQ) has biased composition (basic and acidic residues). Helical transmembrane passes span 622 to 638 (VCVA…ALVL), 644 to 669 (VVGL…YAGI), and 681 to 702 (LLMV…IIIL).

This sequence belongs to the amino acid/polyamine transporter 2 family.

It is found in the vacuole membrane. Functionally, putative amino acid transporter. Probably transports arginine. Involved in maintaining the osmotic homeostasis of the digestive vacuole. Required for extracellular parasite survival and bradyzoite differentiation. The sequence is that of Putative amino acid transporter AAT1 from Toxoplasma gondii (strain ATCC 50611 / Me49).